The chain runs to 890 residues: Translation initiation factor IF-2 (890 aa).

The segment at 110–216 is disordered; the sequence is ISKPISKAPQ…KKPLIKTQDH (107 aa). A compositionally biased stretch (basic residues) spans 135 to 148; the sequence is VPKRKGLVIIKKKR. The segment covering 184–199 has biased composition (basic and acidic residues); that stretch reads KSYNEPKNKENDDIKK. A compositionally biased stretch (basic residues) spans 200–210; the sequence is QKVKKEKKKPL. Positions 387 to 554 constitute a tr-type G domain; sequence TRPPVVTIMG…NILLQAEILE (168 aa). Residues 396–403 are G1; sequence GHVDHGKT. 396 to 403 contacts GTP; sequence GHVDHGKT. Residues 421–425 form a G2 region; that stretch reads GITQH. The tract at residues 442–445 is G3; that stretch reads DTPG. GTP contacts are provided by residues 442–446 and 496–499; these read DTPGH and NKMD. Residues 496 to 499 are G4; it reads NKMD. The interval 532 to 534 is G5; the sequence is SAR.

It belongs to the TRAFAC class translation factor GTPase superfamily. Classic translation factor GTPase family. IF-2 subfamily.

The protein localises to the cytoplasm. In terms of biological role, one of the essential components for the initiation of protein synthesis. Protects formylmethionyl-tRNA from spontaneous hydrolysis and promotes its binding to the 30S ribosomal subunits. Also involved in the hydrolysis of GTP during the formation of the 70S ribosomal complex. This Aliarcobacter butzleri (strain RM4018) (Arcobacter butzleri) protein is Translation initiation factor IF-2.